The following is a 197-amino-acid chain: Small ribosomal subunit protein uS4 (197 aa).

Positions 87-147 (SRIDNVIFRL…ESKKNTQRMK (61 aa)) constitute an S4 RNA-binding domain.

This sequence belongs to the universal ribosomal protein uS4 family. In terms of assembly, part of the 30S ribosomal subunit. Contacts protein S5. The interaction surface between S4 and S5 is involved in control of translational fidelity.

One of the primary rRNA binding proteins, it binds directly to 16S rRNA where it nucleates assembly of the body of the 30S subunit. Functionally, with S5 and S12 plays an important role in translational accuracy. The sequence is that of Small ribosomal subunit protein uS4 from Agathobacter rectalis (strain ATCC 33656 / DSM 3377 / JCM 17463 / KCTC 5835 / VPI 0990) (Eubacterium rectale).